The primary structure comprises 329 residues: Sideroflexin (329 aa).

The next 5 membrane-spanning stretches (helical) occupy residues 95–115 (AFLP…ASIG), 147–167 (ILEA…GLGW), 183–203 (LRMM…VLIM), 238–258 (FSRA…MGLF), and 274–294 (LNLA…IALF).

This sequence belongs to the sideroflexin family.

It localises to the mitochondrion membrane. Its function is as follows. Mitochondrial amino-acid transporter that mediates transport of serine into mitochondria. This chain is Sideroflexin, found in Dictyostelium discoideum (Social amoeba).